Reading from the N-terminus, the 128-residue chain is Sulfurtransferase TusD (128 aa).

The active-site Cysteine persulfide intermediate is the cysteine 78.

This sequence belongs to the DsrE/TusD family. As to quaternary structure, heterohexamer, formed by a dimer of trimers. The hexameric TusBCD complex contains 2 copies each of TusB, TusC and TusD. The TusBCD complex interacts with TusE.

It is found in the cytoplasm. Its function is as follows. Part of a sulfur-relay system required for 2-thiolation of 5-methylaminomethyl-2-thiouridine (mnm(5)s(2)U) at tRNA wobble positions. Accepts sulfur from TusA and transfers it in turn to TusE. The sequence is that of Sulfurtransferase TusD from Erwinia tasmaniensis (strain DSM 17950 / CFBP 7177 / CIP 109463 / NCPPB 4357 / Et1/99).